The primary structure comprises 491 residues: Glutamyl-tRNA(Gln) amidotransferase subunit A (491 aa).

Catalysis depends on charge relay system residues lysine 80 and serine 155. Catalysis depends on serine 179, which acts as the Acyl-ester intermediate.

Belongs to the amidase family. GatA subfamily. Heterotrimer of A, B and C subunits.

It carries out the reaction L-glutamyl-tRNA(Gln) + L-glutamine + ATP + H2O = L-glutaminyl-tRNA(Gln) + L-glutamate + ADP + phosphate + H(+). Its function is as follows. Allows the formation of correctly charged Gln-tRNA(Gln) through the transamidation of misacylated Glu-tRNA(Gln) in organisms which lack glutaminyl-tRNA synthetase. The reaction takes place in the presence of glutamine and ATP through an activated gamma-phospho-Glu-tRNA(Gln). This Salinispora tropica (strain ATCC BAA-916 / DSM 44818 / JCM 13857 / NBRC 105044 / CNB-440) protein is Glutamyl-tRNA(Gln) amidotransferase subunit A.